The primary structure comprises 216 residues: GTP-binding nuclear protein Ran, testis-specific isoform (216 aa).

The residue at position 2 (Ala2) is an N-acetylalanine. A Small GTPase Ran-type domain is found at 7-171; the sequence is PQVQFKVVLV…FWLARKLIGD (165 aa). 17 to 24 serves as a coordination point for GTP; it reads GDGGTGKT. Thr24 is modified (phosphothreonine). A switch-I region spans residues 37 to 45; that stretch reads KEYVATLGV. Lys60 bears the N6-acetyllysine mark. 65–69 lines the GTP pocket; it reads DTAGQ. Residues 68 to 84 form a switch-II region; it reads GQEKFGGLRDGYYIQAQ. Lys71 carries the N6-acetyllysine; alternate modification. Residue Lys71 forms a Glycyl lysine isopeptide (Lys-Gly) (interchain with G-Cter in SUMO2); alternate linkage. Residue Lys71 forms a Glycyl lysine isopeptide (Lys-Gly) (interchain with G-Cter in ubiquitin); alternate linkage. Lys99 is modified (N6-acetyllysine). Position 122–125 (122–125) interacts with GTP; that stretch reads NKVD. Lys134 bears the N6-acetyllysine mark. Lys159 carries the post-translational modification N6-acetyllysine; alternate. Lys159 carries the post-translational modification N6-succinyllysine; alternate.

This sequence belongs to the small GTPase superfamily. Ran family. In terms of tissue distribution, testis specific.

It localises to the nucleus. It catalyses the reaction GTP + H2O = GDP + phosphate + H(+). GTP-binding protein involved in nucleocytoplasmic transport. Required for the import of protein into the nucleus and also for RNA export. Involved in chromatin condensation and control of cell cycle. This Mus musculus (Mouse) protein is GTP-binding nuclear protein Ran, testis-specific isoform (Rasl2-9).